We begin with the raw amino-acid sequence, 314 residues long: Aromatic prenyltransferase (314 aa).

This sequence belongs to the aromatic prenyltransferase family.

Its function is as follows. Prenyltransferase that attaches isoprenoid moieties to carbon atoms of aromatic substrates in an enzyme-catalyzed Friedel-Crafts reaction. This is Aromatic prenyltransferase from Arthroderma otae (strain ATCC MYA-4605 / CBS 113480) (Microsporum canis).